We begin with the raw amino-acid sequence, 133 residues long: ATP synthase epsilon chain, chloroplastic (133 aa).

The protein belongs to the ATPase epsilon chain family. In terms of assembly, F-type ATPases have 2 components, CF(1) - the catalytic core - and CF(0) - the membrane proton channel. CF(1) has five subunits: alpha(3), beta(3), gamma(1), delta(1), epsilon(1). CF(0) has three main subunits: a, b and c.

It localises to the plastid. The protein resides in the chloroplast thylakoid membrane. Functionally, produces ATP from ADP in the presence of a proton gradient across the membrane. This Citrus sinensis (Sweet orange) protein is ATP synthase epsilon chain, chloroplastic.